The following is a 249-amino-acid chain: Type III pantothenate kinase (249 aa).

Residue aspartate 8–lysine 15 coordinates ATP. Substrate contacts are provided by residues tyrosine 95 and glycine 102–arginine 105. Residue aspartate 104 is the Proton acceptor of the active site. Aspartate 125 serves as a coordination point for K(+). Residue threonine 128 participates in ATP binding. Residue threonine 179 participates in substrate binding.

Belongs to the type III pantothenate kinase family. Homodimer. It depends on NH4(+) as a cofactor. The cofactor is K(+).

It localises to the cytoplasm. It catalyses the reaction (R)-pantothenate + ATP = (R)-4'-phosphopantothenate + ADP + H(+). The protein operates within cofactor biosynthesis; coenzyme A biosynthesis; CoA from (R)-pantothenate: step 1/5. Its function is as follows. Catalyzes the phosphorylation of pantothenate (Pan), the first step in CoA biosynthesis. The chain is Type III pantothenate kinase from Alkalilimnicola ehrlichii (strain ATCC BAA-1101 / DSM 17681 / MLHE-1).